A 64-amino-acid polypeptide reads, in one-letter code: Prokaryotic ubiquitin-like protein Pup (64 aa).

Residues 1 to 11 (MAQEQTKRGGG) show a composition bias toward basic and acidic residues. Residues 1-36 (MAQEQTKRGGGGDDDDVTDLGGPAGQERREKLAEDT) form a disordered region. The tract at residues 21–58 (GGPAGQERREKLAEDTDDLLDEIDDVLEENAEDFVRAY) is ARC ATPase binding. A coiled-coil region spans residues 24–52 (AGQERREKLAEDTDDLLDEIDDVLEENAE). At glutamine 64 the chain carries Deamidated glutamine. Glutamine 64 participates in a covalent cross-link: Isoglutamyl lysine isopeptide (Gln-Lys) (interchain with K-? in acceptor proteins).

Belongs to the prokaryotic ubiquitin-like protein family. As to quaternary structure, strongly interacts with the proteasome-associated ATPase ARC through a hydrophobic interface; the interacting region of Pup lies in its C-terminal half. There is one Pup binding site per ARC hexamer ring. Post-translationally, is modified by deamidation of its C-terminal glutamine to glutamate by the deamidase Dop, a prerequisite to the subsequent pupylation process.

It functions in the pathway protein degradation; proteasomal Pup-dependent pathway. Its function is as follows. Protein modifier that is covalently attached to lysine residues of substrate proteins, thereby targeting them for proteasomal degradation. The tagging system is termed pupylation. The protein is Prokaryotic ubiquitin-like protein Pup of Mycobacteroides abscessus (strain ATCC 19977 / DSM 44196 / CCUG 20993 / CIP 104536 / JCM 13569 / NCTC 13031 / TMC 1543 / L948) (Mycobacterium abscessus).